The sequence spans 78 residues: Small ribosomal subunit protein bS18 (78 aa).

The protein belongs to the bacterial ribosomal protein bS18 family. In terms of assembly, part of the 30S ribosomal subunit. Forms a tight heterodimer with protein bS6.

Its function is as follows. Binds as a heterodimer with protein bS6 to the central domain of the 16S rRNA, where it helps stabilize the platform of the 30S subunit. The protein is Small ribosomal subunit protein bS18 of Levilactobacillus brevis (strain ATCC 367 / BCRC 12310 / CIP 105137 / JCM 1170 / LMG 11437 / NCIMB 947 / NCTC 947) (Lactobacillus brevis).